A 669-amino-acid polypeptide reads, in one-letter code: Epithelial sodium channel subunit gamma (669 aa).

Over 1–67 (MAPPYHGDTR…VVSRGRLRKF (67 aa)) the chain is Cytoplasmic. The chain crosses the membrane as a helical span at residues 68–88 (IWILLTLSAVGLILWQCAELI). Residues 89–551 (MSYYTASVSV…VILLSNFGGQ (463 aa)) lie on the Extracellular side of the membrane. 8 disulfide bridges follow: Cys-113-Cys-300, Cys-223-Cys-231, Cys-277-Cys-284, Cys-389-Cys-474, Cys-411-Cys-470, Cys-415-Cys-466, Cys-424-Cys-451, and Cys-426-Cys-440. A helical transmembrane segment spans residues 552-572 (LGLWMSCSMVCVIEIIEVFFI). At 573–669 (DSFSIVMRRR…LPDTLEGRSH (97 aa)) the chain is on the cytoplasmic side. Residues 592–619 (DRKAPRPQEPPQVNAPAKEGHDNPVCTD) form a disordered region.

It belongs to the amiloride-sensitive sodium channel (TC 1.A.6) family. SCNN1G subfamily. In terms of assembly, component of the heterotrimeric epithelial sodium channel (ENaC) composed of an alpha/SCNN1A, a beta/SCNN1B and a gamma/SCNN1G subunit.

It localises to the apical cell membrane. The enzyme catalyses Na(+)(in) = Na(+)(out). Its activity is regulated as follows. Originally identified and characterized by its inhibition by the diuretic drug amiloride. In terms of biological role, this is one of the three pore-forming subunits of the heterotrimeric epithelial sodium channel (ENaC), a critical regulator of sodium balance and fluid homeostasis. ENaC operates in epithelial tissues, where it mediates the electrodiffusion of sodium ions from extracellular fluid through the apical membrane of cells, with water following osmotically. The sequence is that of Epithelial sodium channel subunit gamma from Pelodiscus sinensis (Chinese softshell turtle).